The chain runs to 318 residues: D-alanine--D-alanine ligase (318 aa).

The ATP-grasp domain maps to 116–311 (KQVWQSLGIP…FQQLVLAILA (196 aa)). 142 to 197 (STELGFPLIVKPAHEGSSIGMAKVNSAQELVAAWQDAAKYDSQVLVEQWIHGPEFT) serves as a coordination point for ATP. Mg(2+) is bound by residues Asp265, Glu278, and Asn280.

The protein belongs to the D-alanine--D-alanine ligase family. Mg(2+) is required as a cofactor. The cofactor is Mn(2+).

It is found in the cytoplasm. It catalyses the reaction 2 D-alanine + ATP = D-alanyl-D-alanine + ADP + phosphate + H(+). The protein operates within cell wall biogenesis; peptidoglycan biosynthesis. In terms of biological role, cell wall formation. The protein is D-alanine--D-alanine ligase of Pseudomonas putida (strain GB-1).